The primary structure comprises 84 residues: Cell division topological specificity factor (84 aa).

The protein belongs to the MinE family.

Functionally, prevents the cell division inhibition by proteins MinC and MinD at internal division sites while permitting inhibition at polar sites. This ensures cell division at the proper site by restricting the formation of a division septum at the midpoint of the long axis of the cell. This chain is Cell division topological specificity factor, found in Pseudomonas putida (strain W619).